The sequence spans 371 residues: tRNA-specific 2-thiouridylase MnmA (371 aa).

ATP-binding positions include 16-23 and M42; that span reads GMSGGVDS. The tract at residues 102–104 is interaction with target base in tRNA; that stretch reads NPD. C107 acts as the Nucleophile in catalysis. The cysteines at positions 107 and 204 are disulfide-linked. ATP is bound at residue G132. The interaction with tRNA stretch occupies residues 154-156; the sequence is KDQ. C204 serves as the catalytic Cysteine persulfide intermediate. Residues 316–317 are interaction with tRNA; that stretch reads RY.

It belongs to the MnmA/TRMU family.

The protein resides in the cytoplasm. The catalysed reaction is S-sulfanyl-L-cysteinyl-[protein] + uridine(34) in tRNA + AH2 + ATP = 2-thiouridine(34) in tRNA + L-cysteinyl-[protein] + A + AMP + diphosphate + H(+). Functionally, catalyzes the 2-thiolation of uridine at the wobble position (U34) of tRNA, leading to the formation of s(2)U34. The chain is tRNA-specific 2-thiouridylase MnmA from Shewanella halifaxensis (strain HAW-EB4).